Reading from the N-terminus, the 91-residue chain is ATP synthase subunit c 2 (91 aa).

A run of 2 helical transmembrane segments spans residues 4 to 24 (FSMCVLGAAIGMAIGTLGTGI) and 53 to 73 (IGLAMIESLAIYALVICLIIL).

It belongs to the ATPase C chain family. F-type ATPases have 2 components, F(1) - the catalytic core - and F(0) - the membrane proton channel. F(1) has five subunits: alpha(3), beta(3), gamma(1), delta(1), epsilon(1). F(0) has three main subunits: a(1), b(2) and c(10-14). The alpha and beta chains form an alternating ring which encloses part of the gamma chain. F(1) is attached to F(0) by a central stalk formed by the gamma and epsilon chains, while a peripheral stalk is formed by the delta and b chains.

The protein resides in the cell inner membrane. In terms of biological role, f(1)F(0) ATP synthase produces ATP from ADP in the presence of a proton or sodium gradient. F-type ATPases consist of two structural domains, F(1) containing the extramembraneous catalytic core and F(0) containing the membrane proton channel, linked together by a central stalk and a peripheral stalk. During catalysis, ATP synthesis in the catalytic domain of F(1) is coupled via a rotary mechanism of the central stalk subunits to proton translocation. Its function is as follows. Key component of the F(0) channel; it plays a direct role in translocation across the membrane. A homomeric c-ring of between 10-14 subunits forms the central stalk rotor element with the F(1) delta and epsilon subunits. The sequence is that of ATP synthase subunit c 2 from Pelobacter propionicus (strain DSM 2379 / NBRC 103807 / OttBd1).